The primary structure comprises 310 residues: S-adenosylmethionine-dependent nucleotide dehydratase (310 aa).

The Radical SAM core domain maps to P3–S221. 3 residues coordinate [4Fe-4S] cluster: C17, C21, and C24.

It belongs to the radical SAM superfamily. Viperin family. The cofactor is [4Fe-4S] cluster.

The catalysed reaction is GTP + AH2 + S-adenosyl-L-methionine = 3'-deoxy-3',4'-didehydro-GTP + 5'-deoxyadenosine + L-methionine + A + H2O + H(+). Its function is as follows. Expression of pVip15 in E.coli (strain MG1655) confers resistance to phage T7; prevents culture collapse upon infection. Catalyzes the conversion of guanosine triphosphate (GTP) to 3'-deoxy-3',4'-didehydro-GTP (ddhGTP), probably via a SAM-dependent radical mechanism. The modified nucleotide represses transcription from T7 RNA polymerase-directed genes (possibly by acting as chain terminators), strongly suggesting these nucleotides block viral polymerase transcription. The sequence is that of S-adenosylmethionine-dependent nucleotide dehydratase from Coraliomargarita akajimensis (strain DSM 45221 / IAM 15411 / JCM 23193 / KCTC 12865 / 04OKA010-24).